Reading from the N-terminus, the 315-residue chain is Aldo-keto reductase family 4 member C11 (315 aa).

At alanine 2 the chain carries N-acetylalanine. NADP(+)-binding positions include 23 to 24 (TW) and aspartate 47. Tyrosine 52 serves as the catalytic Proton donor. NADP(+)-binding positions include histidine 114, 158-159 (SN), glutamine 180, 207-213 (SPLGSPG), 256-258 (KST), and 262-266 (RIREN). Serine 295 is modified (phosphoserine).

Belongs to the aldo/keto reductase family.

In terms of biological role, oxidoreductase that may act on a broad range of substrates such as ketosteroids, aldehydes, ketones and sugars. This Arabidopsis thaliana (Mouse-ear cress) protein is Aldo-keto reductase family 4 member C11 (AKR4C11).